The primary structure comprises 712 residues: Probable metal-nicotianamine transporter YSL11 (712 aa).

Residues 25–48 (RRNTTAAARGNAGEEEEEAEAVAP) form a disordered region. The next 14 membrane-spanning stretches (helical) occupy residues 70 to 90 (AFVV…KLSL), 93 to 113 (GVIP…VRLW), 138 to 158 (CVVS…LFGM), 180 to 200 (LGWI…ALVP), 242 to 262 (LGKY…YTAG), 300 to 320 (IVNV…WPLI), 345 to 365 (VFIT…KVFG), 418 to 438 (VAIG…PLII), 446 to 466 (ILIA…GSGL), 478 to 498 (LAIF…LVGL), 532 to 552 (FVSQ…VFWL), 593 to 613 (LTLC…KDLV), 631 to 651 (FYLG…LYFW), and 666 to 686 (VASG…VLSL).

This sequence belongs to the YSL (TC 2.A.67.2) family.

The protein localises to the membrane. Functionally, may be involved in the transport of nicotianamine-chelated metals. In Oryza sativa subsp. japonica (Rice), this protein is Probable metal-nicotianamine transporter YSL11 (YSL11).